Here is a 461-residue protein sequence, read N- to C-terminus: Arginine biosynthesis bifunctional protein ArgJ, chloroplastic (461 aa).

Positions 202, 228, 239, 326, 456, and 461 each coordinate substrate. Threonine 239 (nucleophile) is an active-site residue.

The protein belongs to the ArgJ family. As to quaternary structure, heterodimer of an alpha and a beta chain.

It localises to the plastid. It is found in the chloroplast. It catalyses the reaction N(2)-acetyl-L-ornithine + L-glutamate = N-acetyl-L-glutamate + L-ornithine. The enzyme catalyses L-glutamate + acetyl-CoA = N-acetyl-L-glutamate + CoA + H(+). It functions in the pathway amino-acid biosynthesis; L-arginine biosynthesis; L-ornithine and N-acetyl-L-glutamate from L-glutamate and N(2)-acetyl-L-ornithine (cyclic): step 1/1. It participates in amino-acid biosynthesis; L-arginine biosynthesis; N(2)-acetyl-L-ornithine from L-glutamate: step 1/4. Catalyzes two activities which are involved in the cyclic version of arginine biosynthesis: the synthesis of acetylglutamate from glutamate and acetyl-CoA, and of ornithine by transacetylation between acetylornithine and glutamate. This chain is Arginine biosynthesis bifunctional protein ArgJ, chloroplastic, found in Ostreococcus lucimarinus (strain CCE9901).